The chain runs to 213 residues: Redox-sensing transcriptional repressor Rex (213 aa).

Residues leucine 18–phenylalanine 57 constitute a DNA-binding region (H-T-H motif). Glycine 92–glycine 97 is a binding site for NAD(+).

Belongs to the transcriptional regulatory Rex family. In terms of assembly, homodimer.

The protein resides in the cytoplasm. Functionally, modulates transcription in response to changes in cellular NADH/NAD(+) redox state. Binds to the promoter of the aldehyde-alcohol dehydrogenase adhE gene. Functions as a redox-dependent repressor of adhE expression. In Streptococcus pneumoniae serotype 19F (strain G54), this protein is Redox-sensing transcriptional repressor Rex.